The primary structure comprises 491 residues: Histamine H1 receptor (491 aa).

The Extracellular portion of the chain corresponds to 1 to 30 (MTCPNSSCVFEDKMCQGNKTAPANDAQLTP). Residues Asn5 and Asn18 are each glycosylated (N-linked (GlcNAc...) asparagine). Residues 31–51 (LVVVLSTISLVTVGLNLLVLY) traverse the membrane as a helical segment. Residues 52–65 (AVRSERKLHTVGNL) are Cytoplasmic-facing. The chain crosses the membrane as a helical span at residues 66–90 (YIVSLSVADLIVGVVVMPMNILYLL). The Extracellular segment spans residues 91 to 98 (MSRWSLGR). A helical membrane pass occupies residues 99-124 (PLCLFWLSMDYVASTASIFSVFILCI). An intrachain disulfide couples Cys101 to Cys181. 2 residues coordinate histamine: Asp108 and Thr113. Positions 108 to 113 (DYVAST) are important for agonist binding. At 125–145 (DRYRSVQQPLKYLRYRTKTRA) the chain is on the cytoplasmic side. Residues Thr141 and Thr143 each carry the phosphothreonine modification. A helical membrane pass occupies residues 146 to 165 (SITILAAWFLSFLWIIPILG). At 166 to 189 (WRHFQPKTPEPREDKCETDFYNVT) the chain is on the extracellular side. Residues 190-212 (WFKVMTAIINFYLPTLLMLWFYA) traverse the membrane as a helical segment. Asn199 provides a ligand contact to histamine. Over 213-420 (KIYKAVRQHC…MNRERKAAKQ (208 aa)) the chain is Cytoplasmic. Ser231 carries the post-translational modification Phosphoserine. Disordered regions lie at residues 246–297 (QVGA…KEEK) and 360–385 (QSFS…SESS). Over residues 252-262 (PGKESPWEVLK) the composition is skewed to basic and acidic residues. Residues Ser384, Ser400, and Ser402 each carry the phosphoserine modification. Residues 421 to 444 (LGFIMAAFIICWIPYFIFFMVIAF) form a helical membrane-spanning segment. The segment at 428 to 432 (FIICW) is important for agonist binding. Position 435 (Tyr435) interacts with histamine. Cys445 and Cys448 form a disulfide bridge. Topologically, residues 445–450 (CESCCN) are extracellular. Residues 451-473 (QHVHMFTIWLGYINSTLNPLIYP) form a helical membrane-spanning segment. Topologically, residues 474 to 491 (LCNENFKKTFKKILHIRS) are cytoplasmic.

It belongs to the G-protein coupled receptor 1 family. Post-translationally, phosphorylation at sites in the second and third cytoplasmic loops independently contribute to agonist-induced receptor down-regulation. As to expression, brain, lung, small intestine, uterus, adrenal medulla and spleen.

It is found in the cell membrane. G-protein-coupled receptor for histamine, a biogenic amine that functions as an immune modulator and a neurotransmitter. Through the H1 receptor, histamine mediates the contraction of smooth muscles and increases capillary permeability due to contraction of terminal venules. Also mediates neurotransmission in the central nervous system and thereby regulates circadian rhythms, emotional and locomotor activities as well as cognitive functions. The chain is Histamine H1 receptor from Bos taurus (Bovine).